The chain runs to 330 residues: Negative regulator of the PHO system (330 aa).

The Protein kinase domain occupies 8–290 (FQQLEKLGEG…ARQALQHPWF (283 aa)). ATP-binding positions include 14 to 22 (LGEGTYATV) and K37. Catalysis depends on D131, which acts as the Proton acceptor. The tract at residues 300–330 (MQHLADPYQQSQQQSQQQAQQSQQMDPQTYR) is disordered. A compositionally biased stretch (low complexity) spans 308–323 (QQSQQQSQQQAQQSQQ).

This sequence belongs to the protein kinase superfamily. CMGC Ser/Thr protein kinase family. CDC2/CDKX subfamily. As to quaternary structure, interacts with a number of cyclins.

It carries out the reaction L-seryl-[protein] + ATP = O-phospho-L-seryl-[protein] + ADP + H(+). The enzyme catalyses L-threonyl-[protein] + ATP = O-phospho-L-threonyl-[protein] + ADP + H(+). When phosphate concentrations are high it phosphorylates the PHO4 transcription factor thus establishing repression. The chain is Negative regulator of the PHO system (PHO85) from Debaryomyces hansenii (strain ATCC 36239 / CBS 767 / BCRC 21394 / JCM 1990 / NBRC 0083 / IGC 2968) (Yeast).